Reading from the N-terminus, the 736-residue chain is Dimethylamine dehydrogenase (736 aa).

Cysteine 31 is subject to S-6-FMN cysteine. A substrate-binding site is contributed by 176-179 (YGAH). Residue tyrosine 181 is the Proton donor of the active site. 2 residues coordinate FMN: arginine 229 and arginine 329. [4Fe-4S] cluster is bound by residues cysteine 352, cysteine 355, cysteine 358, and cysteine 371. 398 to 427 (DVLIVGAGPAGSECARVLMERGYTVHLVDT) contributes to the ADP binding site.

The protein in the N-terminal section; belongs to the NADH:flavin oxidoreductase/NADH oxidase family. FMN is required as a cofactor. The cofactor is [4Fe-4S] cluster.

It catalyses the reaction dimethylamine + oxidized [electron-transfer flavoprotein] + H2O + H(+) = methylamine + reduced [electron-transfer flavoprotein] + formaldehyde. This is Dimethylamine dehydrogenase (dmd) from Hyphomicrobium sp. (strain x).